The following is a 155-amino-acid chain: Rhombotin-1 (155 aa).

LIM zinc-binding domains follow at residues 21–83 (KGCA…LFGT) and 85–147 (GNCA…GQLN).

Its subcellular location is the nucleus. Its function is as follows. May be involved in gene regulation within neural lineage cells potentially by direct DNA binding or by binding to other transcription factors. The sequence is that of Rhombotin-1 from Danio rerio (Zebrafish).